The following is a 469-amino-acid chain: MFKNPAELADRVLAGTPVTPDEALDLLRTDDPGMLDLVAAAARLRREHFGMTVKVNYLVNLKSGLCAEDCGYCSQRLNAGTDILKYSWLSPEQAVEQAEYGIKGGASRVCLVASGRGPSNREVGNVTRTVEALKEQHPDVEVCACLGLLKDGQAESLSSAGVNAYNHNLNTAESHYESICSTHTYQDRVDTVERAKDAGLSPCSGLIVGMRETDEQLVEAVFALRDLGSDSVPVNFLMPFEGTPLAGTWQLSPQKCLKILAVVRFVCPDKEIRMAGGREMHLRSLQPLALHVVNSLFLGDYLTSEGQAAEADLAMIADAGFTVLGAGPDPSRDRHAGPADVQGSGAEQGAGERTTTPCGSVCGSAAGSSSGDGSAPDGGRAPADVSRSGPAEAVGSSPEDGSRNAGGPARTRSAAASSAPTGAGMSPALAALLGSDDGPEQDEDDTRVRVELSPTVRRRGAGTSVAPNA.

A Radical SAM core domain is found at 51 to 278 (MTVKVNYLVN…DKEIRMAGGR (228 aa)). The [4Fe-4S] cluster site is built by Cys-66, Cys-70, and Cys-73. The [2Fe-2S] cluster site is built by Cys-110, Cys-143, Cys-203, and Arg-273. A disordered region spans residues 326–469 (AGPDPSRDRH…GAGTSVAPNA (144 aa)). Low complexity-rich tracts occupy residues 363 to 384 (GSAA…APAD) and 405 to 428 (AGGP…MSPA).

It belongs to the radical SAM superfamily. Biotin synthase family. As to quaternary structure, homodimer. The cofactor is [4Fe-4S] cluster. [2Fe-2S] cluster is required as a cofactor.

The catalysed reaction is (4R,5S)-dethiobiotin + (sulfur carrier)-SH + 2 reduced [2Fe-2S]-[ferredoxin] + 2 S-adenosyl-L-methionine = (sulfur carrier)-H + biotin + 2 5'-deoxyadenosine + 2 L-methionine + 2 oxidized [2Fe-2S]-[ferredoxin]. It participates in cofactor biosynthesis; biotin biosynthesis; biotin from 7,8-diaminononanoate: step 2/2. Its function is as follows. Catalyzes the conversion of dethiobiotin (DTB) to biotin by the insertion of a sulfur atom into dethiobiotin via a radical-based mechanism. This Kocuria rhizophila (strain ATCC 9341 / DSM 348 / NBRC 103217 / DC2201) protein is Biotin synthase.